The following is a 582-amino-acid chain: Histone deacetylase 9-B (582 aa).

Residues 146 to 195 (SNEVKQKLQEFLLSKSTKDITLNGIPQKITQSSKLWYTASHHTSLEQSSP) are interaction with mef2. Polar residues predominate over residues 189–205 (SLEQSSPPLGGASSSCK). 4 disordered regions span residues 189-254 (SLEQ…KEGN), 270-314 (TASS…QSRL), 409-447 (LSSG…RTQS), and 496-567 (VHLQ…NQSS). Composition is skewed to basic and acidic residues over residues 213–224 (DYRDDFPLRKTV) and 238–253 (KVAE…RKEG). Low complexity predominate over residues 270-289 (TASSSAPGSGPSSPNGACSA). A compositionally biased stretch (polar residues) spans 295-314 (GPSSLPVTTRTERWPSQSRL).

The protein belongs to the histone deacetylase family. HD type 2 subfamily. As to quaternary structure, homodimer. Interacts with mef2.

The protein resides in the nucleus. The enzyme catalyses N(6)-acetyl-L-lysyl-[histone] + H2O = L-lysyl-[histone] + acetate. In terms of biological role, devoided of intrinsic deacetylase activity, promotes the deacetylation of lysine residues on the N-terminal part of the core histones (H2A, H2B, H3 and H4) by recruiting other histone deacetylases. Histone deacetylation gives a tag for epigenetic repression and plays an important role in transcriptional regulation, cell cycle progression and developmental events. Represses MEF2-dependent transcription. This Danio rerio (Zebrafish) protein is Histone deacetylase 9-B (hdac9b).